Here is a 365-residue protein sequence, read N- to C-terminus: Chorismate synthase (365 aa).

Over residues 41-51 (IQKELDRRRPG) the composition is skewed to basic and acidic residues. Residues 41 to 62 (IQKELDRRRPGQSEVSTPRSEA) are disordered. R48 provides a ligand contact to NADP(+). Residues 125–127 (RSS), G285, 300–304 (KPTPS), and R327 contribute to the FMN site.

The protein belongs to the chorismate synthase family. Requires FMNH2 as cofactor.

It carries out the reaction 5-O-(1-carboxyvinyl)-3-phosphoshikimate = chorismate + phosphate. The protein operates within metabolic intermediate biosynthesis; chorismate biosynthesis; chorismate from D-erythrose 4-phosphate and phosphoenolpyruvate: step 7/7. Its function is as follows. Catalyzes the anti-1,4-elimination of the C-3 phosphate and the C-6 proR hydrogen from 5-enolpyruvylshikimate-3-phosphate (EPSP) to yield chorismate, which is the branch point compound that serves as the starting substrate for the three terminal pathways of aromatic amino acid biosynthesis. This reaction introduces a second double bond into the aromatic ring system. The chain is Chorismate synthase from Methanosarcina mazei (strain ATCC BAA-159 / DSM 3647 / Goe1 / Go1 / JCM 11833 / OCM 88) (Methanosarcina frisia).